The chain runs to 819 residues: uncharacterized protein (819 aa).

S16 is modified (phosphoserine). Disordered regions lie at residues 28 to 83 (SNTQ…PPTV) and 96 to 134 (PTFT…ASKI). Residues 36–63 (KIRFTENENDLSPERAQKEPVSIPHGRY) constitute a DNA-binding region (zn(2)-C6 fungal-type). Polar residues-rich tracts occupy residues 64-77 (TWST…SHLP) and 96-118 (PTFT…NDYI).

The protein resides in the nucleus. This is an uncharacterized protein from Schizosaccharomyces pombe (strain 972 / ATCC 24843) (Fission yeast).